The primary structure comprises 597 residues: Arginine--tRNA ligase (597 aa).

The 'HIGH' region signature appears at 125–135; sequence PNTNKPLHLGH.

It belongs to the class-I aminoacyl-tRNA synthetase family. Monomer.

The protein localises to the cytoplasm. It catalyses the reaction tRNA(Arg) + L-arginine + ATP = L-arginyl-tRNA(Arg) + AMP + diphosphate. The sequence is that of Arginine--tRNA ligase from Bacteroides fragilis (strain ATCC 25285 / DSM 2151 / CCUG 4856 / JCM 11019 / LMG 10263 / NCTC 9343 / Onslow / VPI 2553 / EN-2).